The sequence spans 202 residues: Polyamine-modulated factor 1 (202 aa).

Residues 1–15 (MAEVSRDSEAAERGP) show a composition bias toward basic and acidic residues. Residues 1 to 26 (MAEVSRDSEAAERGPEGSSPEAVPGD) are disordered. Residues 153-194 (EAKNQELADAVLAGRRQVEELQQQVRALQQTWQALHREQREL) adopt a coiled-coil conformation.

In terms of assembly, component of the MIS12 complex composed of MIS12, DSN1, NSL1 and PMF1. Interacts with COPS7A. Interacts via its coiled-coil domain with the leucine-zipper domain of NFE2L2. The interaction with NFE2L2 is required for the transcriptional regulation of SSAT.

The protein resides in the nucleus. It localises to the chromosome. The protein localises to the centromere. It is found in the kinetochore. Its function is as follows. Part of the MIS12 complex which is required for normal chromosome alignment and segregation and for kinetochore formation during mitosis. May act as a cotranscription partner of NFE2L2 involved in regulation of polyamine-induced transcription of SSAT. This is Polyamine-modulated factor 1 from Mus musculus (Mouse).